We begin with the raw amino-acid sequence, 178 residues long: Protein GrpE (178 aa).

This sequence belongs to the GrpE family. Homodimer.

The protein localises to the cytoplasm. Functionally, participates actively in the response to hyperosmotic and heat shock by preventing the aggregation of stress-denatured proteins, in association with DnaK and GrpE. It is the nucleotide exchange factor for DnaK and may function as a thermosensor. Unfolded proteins bind initially to DnaJ; upon interaction with the DnaJ-bound protein, DnaK hydrolyzes its bound ATP, resulting in the formation of a stable complex. GrpE releases ADP from DnaK; ATP binding to DnaK triggers the release of the substrate protein, thus completing the reaction cycle. Several rounds of ATP-dependent interactions between DnaJ, DnaK and GrpE are required for fully efficient folding. The polypeptide is Protein GrpE (Rickettsia africae (strain ESF-5)).